The following is a 400-amino-acid chain: Argininosuccinate synthase (400 aa).

ATP is bound at residue Ala-8–Ser-16. L-citrulline contacts are provided by Tyr-86 and Ser-91. Gly-116 lines the ATP pocket. 3 residues coordinate L-aspartate: Thr-118, Asn-122, and Asp-123. L-citrulline is bound at residue Asn-122. Positions 126, 175, 184, 260, and 272 each coordinate L-citrulline.

The protein belongs to the argininosuccinate synthase family. Type 1 subfamily. As to quaternary structure, homotetramer.

It is found in the cytoplasm. It catalyses the reaction L-citrulline + L-aspartate + ATP = 2-(N(omega)-L-arginino)succinate + AMP + diphosphate + H(+). Its pathway is amino-acid biosynthesis; L-arginine biosynthesis; L-arginine from L-ornithine and carbamoyl phosphate: step 2/3. In Clostridium acetobutylicum (strain ATCC 824 / DSM 792 / JCM 1419 / IAM 19013 / LMG 5710 / NBRC 13948 / NRRL B-527 / VKM B-1787 / 2291 / W), this protein is Argininosuccinate synthase.